We begin with the raw amino-acid sequence, 437 residues long: Ribosomal protein uS12 methylthiotransferase RimO (437 aa).

The region spanning 4–114 (PRIGFISLGC…VMNAVHEHLP (111 aa)) is the MTTase N-terminal domain. Residues Cys-13, Cys-49, Cys-78, Cys-145, Cys-149, and Cys-152 each coordinate [4Fe-4S] cluster. A Radical SAM core domain is found at 131–368 (LTPRHYAYLK…MEVQERISAA (238 aa)). A TRAM domain is found at 371–437 (RTRIGRTETV…AHDLWARLAD (67 aa)).

This sequence belongs to the methylthiotransferase family. RimO subfamily. [4Fe-4S] cluster is required as a cofactor.

Its subcellular location is the cytoplasm. The enzyme catalyses L-aspartate(89)-[ribosomal protein uS12]-hydrogen + (sulfur carrier)-SH + AH2 + 2 S-adenosyl-L-methionine = 3-methylsulfanyl-L-aspartate(89)-[ribosomal protein uS12]-hydrogen + (sulfur carrier)-H + 5'-deoxyadenosine + L-methionine + A + S-adenosyl-L-homocysteine + 2 H(+). In terms of biological role, catalyzes the methylthiolation of an aspartic acid residue of ribosomal protein uS12. The chain is Ribosomal protein uS12 methylthiotransferase RimO from Methylococcus capsulatus (strain ATCC 33009 / NCIMB 11132 / Bath).